The primary structure comprises 317 residues: AT-hook motif nuclear-localized protein 22 (317 aa).

Disordered stretches follow at residues 22 to 41 and 48 to 106; these read HHQF…HDID and LKRD…KPPI. Positions 26-35 are enriched in low complexity; it reads QHQQQQQQQN. Positions 48–64 are enriched in basic and acidic residues; the sequence is LKRDRDADIDPNEHSSA. Residues 72–84 show a composition bias toward gly residues; the sequence is GSGGESGGGGGGD. The segment at residues 89 to 101 is a DNA-binding region (a.T hook); it reads RRPRGRPAGSKNK. Positions 113–253 constitute a PPC domain; the sequence is ANALKSHVME…EDDQEEQTAG (141 aa). The interval 258 to 285 is disordered; sequence NIDGNATMGGGTQTQTQTQQQQQQQLMQ. Low complexity predominate over residues 270 to 282; the sequence is QTQTQTQQQQQQQ.

In terms of assembly, homodimer. Interacts with HDA1/HDA19, HDA6 and HDA9. As to expression, expressed at the hypocotyl-root transition zone and the root hair zone. Also detected in the inflorescence.

The protein resides in the nucleus. In terms of biological role, transcription factor that specifically binds AT-rich DNA sequences related to the nuclear matrix attachment regions (MARs). Binds an AT-rich DNA sequences in the FLOWERING LOCUS T (FT) promoter. Acts redundantly with AHL18, AHL27 and AHL29 in the regulation of flowering and regulation of the hypocotyl elongation. Plays a role in both photo- and skotomorphogenesis. Acts as a chromatin remodeling factor that modifies the architecture of FLOWERING LOCUS T (FT) chromatin by modulating both H3 acetylation and methylation leading to the regulation of FT expression during flowering induction. The polypeptide is AT-hook motif nuclear-localized protein 22 (Arabidopsis thaliana (Mouse-ear cress)).